A 423-amino-acid polypeptide reads, in one-letter code: UDP-N-acetylglucosamine 1-carboxyvinyltransferase 1 (423 aa).

Position 23-24 (23-24) interacts with phosphoenolpyruvate; that stretch reads KN. Residue arginine 96 participates in UDP-N-acetyl-alpha-D-glucosamine binding. Cysteine 120 acts as the Proton donor in catalysis. Cysteine 120 is subject to 2-(S-cysteinyl)pyruvic acid O-phosphothioketal. Residues aspartate 309 and valine 331 each coordinate UDP-N-acetyl-alpha-D-glucosamine.

It belongs to the EPSP synthase family. MurA subfamily.

Its subcellular location is the cytoplasm. The catalysed reaction is phosphoenolpyruvate + UDP-N-acetyl-alpha-D-glucosamine = UDP-N-acetyl-3-O-(1-carboxyvinyl)-alpha-D-glucosamine + phosphate. The protein operates within cell wall biogenesis; peptidoglycan biosynthesis. Cell wall formation. Adds enolpyruvyl to UDP-N-acetylglucosamine. The chain is UDP-N-acetylglucosamine 1-carboxyvinyltransferase 1 from Streptococcus pyogenes serotype M1.